We begin with the raw amino-acid sequence, 401 residues long: Multidrug resistance protein MdtH (401 aa).

The next 11 helical transmembrane spans lie at 13–33, 34–54, 99–116, 139–159, 165–185, 214–234, 243–263, 277–297, 299–319, 340–360, and 368–388; these read YFLL…FPLI, SIRF…ALGL, PWIL…GTLF, LLMM…SWLL, FVCW…AWLL, VLTL…LPIV, AAVK…LYPL, LMAG…ITHL, TLFM…PARE, LGLA…YDTG, and LPWF…YWQF.

It belongs to the major facilitator superfamily. DHA1 family. MdtH (TC 2.A.1.2.21) subfamily.

It is found in the cell inner membrane. The chain is Multidrug resistance protein MdtH from Yersinia pseudotuberculosis serotype O:1b (strain IP 31758).